The primary structure comprises 336 residues: N-lysine methyltransferase KMT5A-B (336 aa).

Disordered stretches follow at residues 1-107 (MGRG…SSKQ) and 141-165 (QSQK…NRKL). A compositionally biased stretch (basic and acidic residues) spans 67 to 93 (SVAHHESKNLGKPTTETRKKAEVEKKR). Residues 95–104 (SSATELSVKS) show a composition bias toward polar residues. Residues 146–162 (VKNKSQRRKAQRKKSPN) show a composition bias toward basic residues. Residues 200–321 (DGMKMDMIIG…VGEELLYDYG (122 aa)) enclose the SET domain. S-adenosyl-L-methionine-binding positions include 210–212 (KGR), tyrosine 255, and 282–283 (NH).

The protein belongs to the class V-like SAM-binding methyltransferase superfamily. Histone-lysine methyltransferase family. PR/SET subfamily. Phosphorylated during mitosis.

The protein resides in the nucleus. Its subcellular location is the chromosome. It carries out the reaction L-lysyl(20)-[histone H4] + S-adenosyl-L-methionine = N(6)-methyl-L-lysyl(20)-[histone H4] + S-adenosyl-L-homocysteine + H(+). The catalysed reaction is L-lysyl-[protein] + S-adenosyl-L-methionine = N(6)-methyl-L-lysyl-[protein] + S-adenosyl-L-homocysteine + H(+). In terms of biological role, protein-lysine N-methyltransferase that monomethylates both histones and non-histone proteins. Specifically monomethylates 'Lys-20' of histone H4 (H4K20me1). H4K20me1 is enriched during mitosis and represents a specific tag for epigenetic transcriptional repression. Mainly functions in euchromatin regions, thereby playing a central role in the silencing of euchromatic genes. Required for cell proliferation, probably by contributing to the maintenance of proper higher-order structure of DNA during mitosis. Involved in chromosome condensation and proper cytokinesis. The polypeptide is N-lysine methyltransferase KMT5A-B (Xenopus laevis (African clawed frog)).